The primary structure comprises 179 residues: ATP-dependent protease subunit HslV (179 aa).

Threonine 7 is a catalytic residue. 3 residues coordinate Na(+): glycine 162, cysteine 165, and threonine 168.

The protein belongs to the peptidase T1B family. HslV subfamily. In terms of assembly, a double ring-shaped homohexamer of HslV is capped on each side by a ring-shaped HslU homohexamer. The assembly of the HslU/HslV complex is dependent on binding of ATP.

The protein localises to the cytoplasm. The enzyme catalyses ATP-dependent cleavage of peptide bonds with broad specificity.. Its activity is regulated as follows. Allosterically activated by HslU binding. In terms of biological role, protease subunit of a proteasome-like degradation complex believed to be a general protein degrading machinery. This chain is ATP-dependent protease subunit HslV, found in Teredinibacter turnerae (strain ATCC 39867 / T7901).